The following is a 331-amino-acid chain: Probable tRNA pseudouridine synthase B (331 aa).

The Nucleophile role is filled by Asp-66. Residues Ile-233–Lys-307 enclose the PUA domain.

Belongs to the pseudouridine synthase TruB family. Type 2 subfamily.

It catalyses the reaction uridine(55) in tRNA = pseudouridine(55) in tRNA. Functionally, could be responsible for synthesis of pseudouridine from uracil-55 in the psi GC loop of transfer RNAs. The chain is Probable tRNA pseudouridine synthase B from Methanococcus aeolicus (strain ATCC BAA-1280 / DSM 17508 / OCM 812 / Nankai-3).